A 22-amino-acid chain; its full sequence is Brevinin-2LTa (22 aa).

Expressed by the skin glands.

It is found in the secreted. Has antibacterial activity. This is Brevinin-2LTa from Rana latastei (Italian agile frog).